The chain runs to 330 residues: Endochitinase Ziz m 1.0101 (330 aa).

The first 24 residues, 1–24 (MVPQAKLVVASLILTSALIQTSEA), serve as a signal peptide directing secretion. Residues 26–330 (GGIATYWGQY…LRTKFMYQNA (305 aa)) enclose the GH18 domain. Cystine bridges form between Cys-47-Cys-90, Cys-77-Cys-80, and Cys-187-Cys-219. The binds to IgE in 70% of the 10 patients tested allergic to Indian jujube and latex stretch occupies residues 72-86 (NISGHCSDCTFLGEE). Positions 292 to 301 (VWNRYYDLKT) are binds to IgE in 100% of the 10 patients tested allergic to Indian jujube and latex; sufficient for prediction of the presence of allergic reactions in these patients. Binds to IgE in 70% of the 10 patients tested allergic to Indian jujube and latex stretches follow at residues 300–311 (KTNYSSSIILEY) and 309–320 (LEYVNSGTKYLP).

Belongs to the glycosyl hydrolase 18 family. Chitinase class II subfamily.

Its subcellular location is the secreted. The enzyme catalyses Random endo-hydrolysis of N-acetyl-beta-D-glucosaminide (1-&gt;4)-beta-linkages in chitin and chitodextrins.. In terms of biological role, defense against chitin containing fungal pathogens. In Ziziphus mauritiana (Indian jujube), this protein is Endochitinase Ziz m 1.0101.